A 205-amino-acid chain; its full sequence is dITP/XTP pyrophosphatase (205 aa).

Threonine 10–lysine 15 serves as a coordination point for substrate. Mg(2+)-binding residues include glutamate 44 and aspartate 73. Catalysis depends on aspartate 73, which acts as the Proton acceptor. Substrate-binding positions include serine 74, phenylalanine 156–aspartate 159, lysine 179, and histidine 184–arginine 185.

This sequence belongs to the HAM1 NTPase family. In terms of assembly, homodimer. It depends on Mg(2+) as a cofactor.

The enzyme catalyses XTP + H2O = XMP + diphosphate + H(+). It catalyses the reaction dITP + H2O = dIMP + diphosphate + H(+). It carries out the reaction ITP + H2O = IMP + diphosphate + H(+). Pyrophosphatase that catalyzes the hydrolysis of nucleoside triphosphates to their monophosphate derivatives, with a high preference for the non-canonical purine nucleotides XTP (xanthosine triphosphate), dITP (deoxyinosine triphosphate) and ITP. Seems to function as a house-cleaning enzyme that removes non-canonical purine nucleotides from the nucleotide pool, thus preventing their incorporation into DNA/RNA and avoiding chromosomal lesions. The protein is dITP/XTP pyrophosphatase of Dictyoglomus thermophilum (strain ATCC 35947 / DSM 3960 / H-6-12).